The following is a 1045-amino-acid chain: Endoglucanase B (1045 aa).

An N-terminal signal peptide occupies residues 1–33 (MLRQVPRTLVAGGSALAVAVGVLVAPLATGAAA). The segment at 34–492 (APTYNYAEAL…LASFPTPEQP (459 aa)) is catalytic. The Nucleophile role is filled by aspartate 91. Active-site residues include histidine 410, aspartate 449, and glutamate 458. The CBM3 domain maps to 493–642 (DGDQLFVEAM…STLVWGKEPT (150 aa)). Linker ('hinge') (Pro-Thr box) regions lie at residues 644–650 (TTTDTTP), 734–748 (AAVT…ETEP), 831–846 (APVT…DTVA), and 931–944 (SPVT…TSTP). 3 consecutive Fibronectin type-III domains span residues 653-743 (TPGT…TDTT), 751-840 (TPGT…TAAP), and 849-940 (VPGT…TLPV). A CBM2 domain is found at 939 to 1045 (PVTSTPSCTV…SFTVNGEVCG (107 aa)). A disulfide bond links cysteine 946 and cysteine 1044.

It belongs to the glycosyl hydrolase 9 (cellulase E) family.

The enzyme catalyses Endohydrolysis of (1-&gt;4)-beta-D-glucosidic linkages in cellulose, lichenin and cereal beta-D-glucans.. Its function is as follows. The biological conversion of cellulose to glucose generally requires three types of hydrolytic enzymes: (1) Endoglucanases which cut internal beta-1,4-glucosidic bonds; (2) Exocellobiohydrolases that cut the disaccharide cellobiose from the non-reducing end of the cellulose polymer chain; (3) Beta-1,4-glucosidases which hydrolyze the cellobiose and other short cello-oligosaccharides to glucose. The chain is Endoglucanase B (cenB) from Cellulomonas fimi.